A 396-amino-acid polypeptide reads, in one-letter code: 1-deoxy-D-xylulose 5-phosphate reductoisomerase (396 aa).

5 residues coordinate NADPH: Thr-13, Gly-14, Ser-15, Ile-16, and Asn-127. Lys-128 lines the 1-deoxy-D-xylulose 5-phosphate pocket. Residue Glu-129 participates in NADPH binding. Asp-153 contacts Mn(2+). Positions 154, 155, 184, and 207 each coordinate 1-deoxy-D-xylulose 5-phosphate. Residue Glu-155 coordinates Mn(2+). An NADPH-binding site is contributed by Gly-213. Residues Ser-220, Asn-225, Lys-226, and Glu-229 each coordinate 1-deoxy-D-xylulose 5-phosphate. Glu-229 is a Mn(2+) binding site.

The protein belongs to the DXR family. Requires Mg(2+) as cofactor. It depends on Mn(2+) as a cofactor.

It catalyses the reaction 2-C-methyl-D-erythritol 4-phosphate + NADP(+) = 1-deoxy-D-xylulose 5-phosphate + NADPH + H(+). The protein operates within isoprenoid biosynthesis; isopentenyl diphosphate biosynthesis via DXP pathway; isopentenyl diphosphate from 1-deoxy-D-xylulose 5-phosphate: step 1/6. Its function is as follows. Catalyzes the NADPH-dependent rearrangement and reduction of 1-deoxy-D-xylulose-5-phosphate (DXP) to 2-C-methyl-D-erythritol 4-phosphate (MEP). The sequence is that of 1-deoxy-D-xylulose 5-phosphate reductoisomerase from Pseudomonas aeruginosa (strain UCBPP-PA14).